The chain runs to 274 residues: NADPH-dependent 7-cyano-7-deazaguanine reductase (274 aa).

80 to 82 is a substrate binding site; it reads VES. 82-83 lines the NADPH pocket; it reads SK. The active-site Thioimide intermediate is the Cys-181. Asp-188 serves as the catalytic Proton donor. A substrate-binding site is contributed by 220–221; the sequence is HE. 249 to 250 lines the NADPH pocket; it reads RG.

The protein belongs to the GTP cyclohydrolase I family. QueF type 2 subfamily. Homodimer.

The protein resides in the cytoplasm. The catalysed reaction is 7-aminomethyl-7-carbaguanine + 2 NADP(+) = 7-cyano-7-deazaguanine + 2 NADPH + 3 H(+). The protein operates within tRNA modification; tRNA-queuosine biosynthesis. Functionally, catalyzes the NADPH-dependent reduction of 7-cyano-7-deazaguanine (preQ0) to 7-aminomethyl-7-deazaguanine (preQ1). This Burkholderia vietnamiensis (strain G4 / LMG 22486) (Burkholderia cepacia (strain R1808)) protein is NADPH-dependent 7-cyano-7-deazaguanine reductase.